The chain runs to 378 residues: Actin-related protein 2/3 complex subunit 1B (378 aa).

WD repeat units lie at residues 8–47, 53–92, 97–138, 143–182, 203–242, 257–295, and 331–375; these read RFAE…HWER, KHDQ…WVPT, RLNR…WVSK, RHES…VDTK, LSYS…PLAQ, ISEK…KAAS, and VHDN…QELG. A disordered region spans residues 319 to 340; it reads TTANDASDSRGGVHDNSITSIV.

The protein belongs to the WD repeat ARPC1 family. As to quaternary structure, component of the Arp2/3 complex composed of ARP2, ARP3, ARPC1/p41-ARC, ARPC2/p34-ARC, ARPC3/p21-ARC, ARPC4/p20-ARC and ARPC5/p16-ARC. As to expression, expressed at low levels in all tissues with a relatively highest expression in inflorescences.

The protein resides in the cytoplasm. The protein localises to the cytoskeleton. Functions as a component of the Arp2/3 complex which is involved in regulation of actin polymerization and together with an activating nucleation-promoting factor (NPF) mediates the formation of branched actin networks. Arp2/3 complex plays a critical role in the control of cell morphogenesis via the modulation of cell polarity development. This is Actin-related protein 2/3 complex subunit 1B (ARPC1B) from Arabidopsis thaliana (Mouse-ear cress).